The following is a 154-amino-acid chain: MGLSDQEWQQVLTIWGKVESDIAGHGHAILMRLFQDHPETLDRFEKFKGLTTPEQMKASEELKKHGVTVLTQLGKILKQKGKHEAELKPLAQTHATKHKIPVKYLEFISEVIIKVIAEKHSADFGADSQAAMKKALELFRNDMASKYKEFGFQG.

One can recognise a Globin domain in the interval 2–148; it reads GLSDQEWQQV…FRNDMASKYK (147 aa). Histidine 65 provides a ligand contact to nitrite. Histidine 65 lines the O2 pocket. Histidine 94 is a heme b binding site.

As to quaternary structure, monomeric.

The protein localises to the cytoplasm. It localises to the sarcoplasm. The catalysed reaction is Fe(III)-heme b-[protein] + nitric oxide + H2O = Fe(II)-heme b-[protein] + nitrite + 2 H(+). It carries out the reaction H2O2 + AH2 = A + 2 H2O. Monomeric heme protein which primary function is to store oxygen and facilitate its diffusion within muscle tissues. Reversibly binds oxygen through a pentacoordinated heme iron and enables its timely and efficient release as needed during periods of heightened demand. Depending on the oxidative conditions of tissues and cells, and in addition to its ability to bind oxygen, it also has a nitrite reductase activity whereby it regulates the production of bioactive nitric oxide. Under stress conditions, like hypoxia and anoxia, it also protects cells against reactive oxygen species thanks to its pseudoperoxidase activity. This is Myoglobin (MB) from Struthio camelus (Common ostrich).